Here is a 153-residue protein sequence, read N- to C-terminus: Pheromone-binding protein Gp-9 (153 aa).

The first 19 residues, 1 to 19 (MKTFVLHIFIFALVAFASA), serve as a signal peptide directing secretion. 3 disulfides stabilise this stretch: Cys37-Cys77, Cys73-Cys129, and Cys118-Cys138.

Belongs to the PBP/GOBP family. Homodimer.

The protein resides in the secreted. Colony queen number, a major feature of social organization, is associated with worker genotype for Gp-9. Colonies are headed by either a single reproductive queen (monogyne form) or multiple queens (polygyne form). Differences in worker Gp-9 genotypes between social forms may cause differences in workers' abilities to recognize queens and regulate their numbers. The polypeptide is Pheromone-binding protein Gp-9 (Solenopsis daguerrei (Workerless parasitic ant)).